Reading from the N-terminus, the 99-residue chain is Keratinocyte differentiation-associated protein (99 aa).

The N-terminal stretch at 1–22 (MKIPVLPAVVLLSLLVLHSAQG) is a signal peptide.

As to expression, highly expressed in skin and detected at lower levels in thymus. In skin, found exclusively in lamellar granules of granular keratinocytes and in the intracellular space of the stratum corneum. Also highly expressed in oral mucosa, tongue, esophagus, and stomach, and at much lower levels in bladder and uterus. Not detected in gastrointestinal mucosa.

It localises to the secreted. Functionally, may act as a soluble regulator of keratinocyte differentiation. May play an important role in embryonic skin morphogenesis. The polypeptide is Keratinocyte differentiation-associated protein (KRTDAP) (Homo sapiens (Human)).